The following is a 334-amino-acid chain: Holliday junction branch migration complex subunit RuvB (334 aa).

The tract at residues 1 to 182 is large ATPase domain (RuvB-L); the sequence is MNERMVDQSM…FGVHLRLEYY (182 aa). Residues Leu-21, Arg-22, Gly-63, Lys-66, Thr-67, Thr-68, 129-131, Arg-172, Tyr-182, and Arg-219 contribute to the ATP site; that span reads EDF. Residue Thr-67 coordinates Mg(2+). Positions 183–253 are small ATPAse domain (RuvB-S); that stretch reads NESDLKEIII…TTKHALGLLQ (71 aa). Positions 256–334 are head domain (RuvB-H); that stretch reads QHGLDYIDHK…HFAKSNEERE (79 aa). Arg-292, Arg-311, and Arg-316 together coordinate DNA.

The protein belongs to the RuvB family. Homohexamer. Forms an RuvA(8)-RuvB(12)-Holliday junction (HJ) complex. HJ DNA is sandwiched between 2 RuvA tetramers; dsDNA enters through RuvA and exits via RuvB. An RuvB hexamer assembles on each DNA strand where it exits the tetramer. Each RuvB hexamer is contacted by two RuvA subunits (via domain III) on 2 adjacent RuvB subunits; this complex drives branch migration. In the full resolvosome a probable DNA-RuvA(4)-RuvB(12)-RuvC(2) complex forms which resolves the HJ.

It localises to the cytoplasm. The catalysed reaction is ATP + H2O = ADP + phosphate + H(+). The RuvA-RuvB-RuvC complex processes Holliday junction (HJ) DNA during genetic recombination and DNA repair, while the RuvA-RuvB complex plays an important role in the rescue of blocked DNA replication forks via replication fork reversal (RFR). RuvA specifically binds to HJ cruciform DNA, conferring on it an open structure. The RuvB hexamer acts as an ATP-dependent pump, pulling dsDNA into and through the RuvAB complex. RuvB forms 2 homohexamers on either side of HJ DNA bound by 1 or 2 RuvA tetramers; 4 subunits per hexamer contact DNA at a time. Coordinated motions by a converter formed by DNA-disengaged RuvB subunits stimulates ATP hydrolysis and nucleotide exchange. Immobilization of the converter enables RuvB to convert the ATP-contained energy into a lever motion, pulling 2 nucleotides of DNA out of the RuvA tetramer per ATP hydrolyzed, thus driving DNA branch migration. The RuvB motors rotate together with the DNA substrate, which together with the progressing nucleotide cycle form the mechanistic basis for DNA recombination by continuous HJ branch migration. Branch migration allows RuvC to scan DNA until it finds its consensus sequence, where it cleaves and resolves cruciform DNA. The sequence is that of Holliday junction branch migration complex subunit RuvB from Staphylococcus aureus (strain MRSA252).